The sequence spans 244 residues: MAAAASPAFLLCLPLLHLLSGWSRAGWVDTHCLCYDFIITPKSRPEPQWCEVQGLVDERPFLHYDCVNHKAKAFASLGKKVNVTKTWEEQTETLRDVVDFLKGQLLDIQVENLIPIEPLTLQARMSCEHEAHGHGRGSWQFLFNGQKFLLFDSNNRKWTALHPGAKKMTEKWEKNRDVTMFFQKISLGDCKMWLEEFLMYWEQMLDPTKPPSLAPGTTQPKAMATTLSPWSLLIIFLCFILAGR.

Positions 1-25 (MAAAASPAFLLCLPLLHLLSGWSRA) are cleaved as a signal peptide. The interval 26–117 (GWVDTHCLCY…IQVENLIPIE (92 aa)) is MHC class I alpha-1 like. Cysteines 50 and 66 form a disulfide. N-linked (GlcNAc...) asparagine glycosylation is present at Asn-82. The interval 118 to 208 (PLTLQARMSC…MYWEQMLDPT (91 aa)) is MHC class I alpha-2 like. The cysteines at positions 127 and 190 are disulfide-linked. The GPI-anchor amidated glycine moiety is linked to residue Gly-216. The propeptide at 217–244 (TTQPKAMATTLSPWSLLIIFLCFILAGR) is removed in mature form.

Belongs to the MHC class I family. As to quaternary structure, interacts with KLRK1/NKG2D. Does not bind to beta2-microglobulin. (Microbial infection) In CMV-infected cells, interacts with the viral glycoprotein UL16; this interaction causes ULBP1 retention in the endoplasmic reticulum and cis-Golgi and prevents binding to and activation of KLRK1/NKG2D, providing CMV with an immune evasion mechanism. As to expression, expressed in T-cells, B-cells, erythroleukemia cell lines and in a wide range of tissues including heart, brain, lung, liver, testis, lymph node, thymus, tonsil and bone marrow. Also found in fetal heart, brain, lung and liver.

Its subcellular location is the cell membrane. It localises to the endoplasmic reticulum. Its function is as follows. Binds and activates the KLRK1/NKG2D receptor, mediating natural killer cell cytotoxicity. The polypeptide is UL16-binding protein 1 (ULBP1) (Homo sapiens (Human)).